The following is a 465-amino-acid chain: Indoleacetamide hydrolase (465 aa).

The interval 1-40 (MVRGRHRSRDPQRRDLRGRDRRSASRTDARRQSAAERGCR) is disordered. The span at 9 to 39 (RDPQRRDLRGRDRRSASRTDARRQSAAERGC) shows a compositional bias: basic and acidic residues. S149 acts as the Charge relay system in catalysis. The active-site Acyl-ester intermediate is the S173.

This sequence belongs to the amidase family.

It participates in plant hormone metabolism; auxin biosynthesis. Hydrolyzes indole-3-acetamide (IAM) into indole-3-acetic acid (IAA). This chain is Indoleacetamide hydrolase (bam), found in Bradyrhizobium japonicum.